Here is a 148-residue protein sequence, read N- to C-terminus: Small ribosomal subunit protein uS15 (148 aa).

The segment covering 1–14 (MGRLHSHRHGKSHS) has biased composition (basic residues). The segment at 1-27 (MGRLHSHRHGKSHSIRPSSPKAPSWIQ) is disordered.

It belongs to the universal ribosomal protein uS15 family. Part of the 30S ribosomal subunit.

The polypeptide is Small ribosomal subunit protein uS15 (Cenarchaeum symbiosum (strain A)).